Consider the following 37-residue polypeptide: Large ribosomal subunit protein bL36A (37 aa).

The protein belongs to the bacterial ribosomal protein bL36 family.

This Actinobacillus pleuropneumoniae serotype 3 (strain JL03) protein is Large ribosomal subunit protein bL36A.